We begin with the raw amino-acid sequence, 165 residues long: Trypsin alpha-3 (165 aa).

The region spanning 1–163 (NSGGVLVSVA…LRSWVVSAAN (163 aa)) is the Peptidase S1 domain. Aspartate 26 acts as the Charge relay system in catalysis. Cystine bridges form between cysteine 89–cysteine 106 and cysteine 115–cysteine 139. Serine 119 acts as the Charge relay system in catalysis.

The protein belongs to the peptidase S1 family.

Its subcellular location is the secreted. It is found in the extracellular space. The catalysed reaction is Preferential cleavage: Arg-|-Xaa, Lys-|-Xaa.. The polypeptide is Trypsin alpha-3 (Lucilia cuprina (Green bottle fly)).